A 378-amino-acid polypeptide reads, in one-letter code: Erythronate-4-phosphate dehydrogenase (378 aa).

Positions 45 and 66 each coordinate substrate. The NAD(+) site is built by Asp142 and Thr169. Residue Arg202 is part of the active site. Asp226 contacts NAD(+). Residue Glu231 is part of the active site. The Proton donor role is filled by His248. Residue Gly251 participates in NAD(+) binding. Tyr252 provides a ligand contact to substrate.

Belongs to the D-isomer specific 2-hydroxyacid dehydrogenase family. PdxB subfamily. Homodimer.

The protein localises to the cytoplasm. The catalysed reaction is 4-phospho-D-erythronate + NAD(+) = (R)-3-hydroxy-2-oxo-4-phosphooxybutanoate + NADH + H(+). It functions in the pathway cofactor biosynthesis; pyridoxine 5'-phosphate biosynthesis; pyridoxine 5'-phosphate from D-erythrose 4-phosphate: step 2/5. Catalyzes the oxidation of erythronate-4-phosphate to 3-hydroxy-2-oxo-4-phosphonooxybutanoate. The protein is Erythronate-4-phosphate dehydrogenase of Cellvibrio japonicus (strain Ueda107) (Pseudomonas fluorescens subsp. cellulosa).